The chain runs to 85 residues: Small ribosomal subunit protein bS18 (85 aa).

The protein belongs to the bacterial ribosomal protein bS18 family. As to quaternary structure, part of the 30S ribosomal subunit. Forms a tight heterodimer with protein bS6.

Its function is as follows. Binds as a heterodimer with protein bS6 to the central domain of the 16S rRNA, where it helps stabilize the platform of the 30S subunit. In Helicobacter pylori (strain P12), this protein is Small ribosomal subunit protein bS18.